A 200-amino-acid polypeptide reads, in one-letter code: Small ribosomal subunit protein uS4 (200 aa).

The segment at threonine 22 to lysine 43 is disordered. The S4 RNA-binding domain occupies glutamine 92 to glutamate 170.

It belongs to the universal ribosomal protein uS4 family. As to quaternary structure, part of the 30S ribosomal subunit. Contacts protein S5. The interaction surface between S4 and S5 is involved in control of translational fidelity.

Functionally, one of the primary rRNA binding proteins, it binds directly to 16S rRNA where it nucleates assembly of the body of the 30S subunit. In terms of biological role, with S5 and S12 plays an important role in translational accuracy. The protein is Small ribosomal subunit protein uS4 of Listeria monocytogenes serotype 4b (strain F2365).